The sequence spans 379 residues: PqqA peptide cyclase (379 aa).

Residues 8–220 (LPAPIGLLAE…IRVVEEARER (213 aa)) form the Radical SAM core domain. [4Fe-4S] cluster contacts are provided by cysteine 22, cysteine 26, and cysteine 29.

This sequence belongs to the radical SAM superfamily. PqqE family. In terms of assembly, interacts with PqqD. The interaction is necessary for activity of PqqE. [4Fe-4S] cluster is required as a cofactor.

It carries out the reaction [PQQ precursor protein] + S-adenosyl-L-methionine = E-Y cross-linked-[PQQ precursor protein] + 5'-deoxyadenosine + L-methionine + H(+). It participates in cofactor biosynthesis; pyrroloquinoline quinone biosynthesis. Catalyzes the cross-linking of a glutamate residue and a tyrosine residue in the PqqA protein as part of the biosynthesis of pyrroloquinoline quinone (PQQ). In Methylobacterium sp. (strain 4-46), this protein is PqqA peptide cyclase.